We begin with the raw amino-acid sequence, 290 residues long: MRIADYSVTKAVLERHGFTFKKSFGQNFLTDTNILQKIVDTAEIDDQVNVIEIGPGIGALTEFLAERAAEVMAFEIDHRLVPILADTLRDFDNVTVVNEDILKVDLAQHIQNFKNPDLPIKVVANLPYYITTPILMHLIESGIPFSEFVVMMQKEVADRISAQPNTKAYGSLSIAVQYYMTAKVAFIVPRTVFVPAPNVDSAILKMVRRPVPAVAVEDENFFFKVSKASFTHRRKTLWNNLTGYFGKTEEVKDKLTKALDQAGLSPSVRGEALSLEEFASLADALKGQGL.

S-adenosyl-L-methionine is bound by residues N27, L29, G54, E75, D100, and N125.

It belongs to the class I-like SAM-binding methyltransferase superfamily. rRNA adenine N(6)-methyltransferase family. RsmA subfamily.

It localises to the cytoplasm. The catalysed reaction is adenosine(1518)/adenosine(1519) in 16S rRNA + 4 S-adenosyl-L-methionine = N(6)-dimethyladenosine(1518)/N(6)-dimethyladenosine(1519) in 16S rRNA + 4 S-adenosyl-L-homocysteine + 4 H(+). Specifically dimethylates two adjacent adenosines (A1518 and A1519) in the loop of a conserved hairpin near the 3'-end of 16S rRNA in the 30S particle. May play a critical role in biogenesis of 30S subunits. This is Ribosomal RNA small subunit methyltransferase A from Streptococcus pneumoniae (strain P1031).